The primary structure comprises 139 residues: Gas vesicle protein A (139 aa).

Residues glutamate 113–arginine 139 form a disordered region. Residues alanine 129 to arginine 139 show a composition bias toward basic residues.

It belongs to the gas vesicle GvpA family. In terms of assembly, the gas vesicle shell is 2 nm thick and consists of a single layer of this protein. It forms helical ribs nearly perpendicular to the long axis of the vesicle.

It localises to the gas vesicle shell. Gas vesicles are hollow, gas filled proteinaceous nanostructures found in some microorganisms. During planktonic growth they allow positioning of the organism at a favorable depth for light or nutrient acquisition. GvpA forms the protein shell. The polypeptide is Gas vesicle protein A (Mycobacterium sp. (strain JLS)).